Consider the following 534-residue polypeptide: Phosphoenolpyruvate carboxykinase (ATP) (534 aa).

The substrate site is built by Arg58, Tyr194, and Lys200. ATP-binding positions include Lys200, His219, and 235-243; that span reads GLSGTGKTT. The Mn(2+) site is built by Lys200 and His219. A Mn(2+)-binding site is contributed by Asp256. The ATP site is built by Glu284, Arg322, and Thr449. Arg322 contributes to the substrate binding site.

The protein belongs to the phosphoenolpyruvate carboxykinase (ATP) family. Requires Mn(2+) as cofactor.

It is found in the cytoplasm. It catalyses the reaction oxaloacetate + ATP = phosphoenolpyruvate + ADP + CO2. Its pathway is carbohydrate biosynthesis; gluconeogenesis. Its function is as follows. Involved in the gluconeogenesis. Catalyzes the conversion of oxaloacetate (OAA) to phosphoenolpyruvate (PEP) through direct phosphoryl transfer between the nucleoside triphosphate and OAA. The protein is Phosphoenolpyruvate carboxykinase (ATP) of Novosphingobium aromaticivorans (strain ATCC 700278 / DSM 12444 / CCUG 56034 / CIP 105152 / NBRC 16084 / F199).